An 841-amino-acid polypeptide reads, in one-letter code: Alpha-glucuronidase A (841 aa).

Positions 1–20 (MRGSNLFQLTLALLLSLVAA) are cleaved as a signal peptide. Residues N51, N76, N149, N222, N279, N310, N343, N450, N465, N527, N576, N682, N723, and N732 are each glycosylated (N-linked (GlcNAc...) asparagine).

This sequence belongs to the glycosyl hydrolase 67 family.

The protein resides in the secreted. It carries out the reaction an alpha-D-glucuronoside + H2O = D-glucuronate + an alcohol. Alpha-glucuronidase involved in the hydrolysis of xylan, a major structural heterogeneous polysaccharide found in plant biomass representing the second most abundant polysaccharide in the biosphere, after cellulose. Releases 4-O-methylglucuronic acid from xylan. The chain is Alpha-glucuronidase A (aguA) from Aspergillus tubingensis.